The sequence spans 851 residues: DNA mismatch repair protein MutS (851 aa).

Residue Gly614 to Ser621 participates in ATP binding.

Belongs to the DNA mismatch repair MutS family.

This protein is involved in the repair of mismatches in DNA. It is possible that it carries out the mismatch recognition step. This protein has a weak ATPase activity. The polypeptide is DNA mismatch repair protein MutS (Photorhabdus laumondii subsp. laumondii (strain DSM 15139 / CIP 105565 / TT01) (Photorhabdus luminescens subsp. laumondii)).